A 161-amino-acid chain; its full sequence is Bacterial E2-like ubiquitin protein BilB (161 aa).

Residue Cys113 is the Glycyl thioester intermediate of the active site.

In terms of biological role, component of the Bil (bacterial ISG15-like) antiviral defense system, composed of BilA, BilB, BilC and BilD. The Bil system specifically conjugates a ubiquitin-like moiety (bilA) to the bacteriophage central tail fiber (CTF, or tip attachment protein J) via reactions involving E1 (bilD) and E2 (bilB). Modifies CTF of phage SECphi27 and SECphi4, which probably interferes with assembly of the phage tail. Also modifies T5 baseplate hub protein pb3 (gene D16), but not gp27 of phage T6 (Bil defends against T6). BilB probably accepts ubiquitin from the BilA-BilD (E1) complex and catalyzes its covalent attachment to target protein (CTF). Bil-encoding bacteria produce mostly defective phage SECphi27, many of which have phage assembly defects, including no tails. SECphi27 phage progeny produced in E.coli with the Bil system inject less DNA into naive host cells, maybe because the phage are less able to adsorb and inject their DNA into host cells. Expression of the Bil system in E.coli (strain MG1655) confers about 100-fold resistance to phage SECphi27, SECphi18, SECphi6, SECphi4 and T5, but not to SECphi17. When cells expressing the Bil system are infected by phage SECphi27 at low multiplicity of infection (0.03 MOI) the culture survives, at 3.0 MOI the culture collapses at the same time as cells without the Bil system. This Collimonas sp. (strain OK412) protein is Bacterial E2-like ubiquitin protein BilB.